We begin with the raw amino-acid sequence, 241 residues long: Transcription factor HEC1 (241 aa).

Residues 128–177 form the bHLH domain; it reads ISKDPQSVAARHRRERISERIRILQRLVPGGTKMDTASMLDEAIHYVKFL.

In terms of assembly, homodimer. Interacts with SPT. Interacts with BZIP30. In terms of tissue distribution, flowers, especially in gynoecium.

The protein localises to the nucleus. Required for the female reproductive tract development and fertility. The chain is Transcription factor HEC1 (HEC1) from Arabidopsis thaliana (Mouse-ear cress).